Consider the following 123-residue polypeptide: Ribosome-binding factor A (123 aa).

This sequence belongs to the RbfA family. As to quaternary structure, monomer. Binds 30S ribosomal subunits, but not 50S ribosomal subunits or 70S ribosomes.

The protein localises to the cytoplasm. In terms of biological role, one of several proteins that assist in the late maturation steps of the functional core of the 30S ribosomal subunit. Associates with free 30S ribosomal subunits (but not with 30S subunits that are part of 70S ribosomes or polysomes). Required for efficient processing of 16S rRNA. May interact with the 5'-terminal helix region of 16S rRNA. This chain is Ribosome-binding factor A, found in Neisseria gonorrhoeae (strain ATCC 700825 / FA 1090).